A 296-amino-acid polypeptide reads, in one-letter code: Transcription factor bHLH99 (296 aa).

Residues 99 to 150 form the bHLH domain; it reads NQRMNHIAVERNRRKQMNHFLSILKSMMPLSYSQPNDQASIIEGTISYLKKL.

As to quaternary structure, homodimer. Expressed constitutively in roots, stems, and flowers.

The protein localises to the nucleus. The sequence is that of Transcription factor bHLH99 (BHLH99) from Arabidopsis thaliana (Mouse-ear cress).